The primary structure comprises 183 residues: Dual-action ribosomal maturation protein DarP (183 aa).

The protein belongs to the DarP family.

Its subcellular location is the cytoplasm. Member of a network of 50S ribosomal subunit biogenesis factors which assembles along the 30S-50S interface, preventing incorrect 23S rRNA structures from forming. Promotes peptidyl transferase center (PTC) maturation. The chain is Dual-action ribosomal maturation protein DarP from Shigella flexneri.